The primary structure comprises 218 residues: Adenylate kinase (218 aa).

Position 10–15 (10–15 (GAGKGT)) interacts with ATP. The NMP stretch occupies residues 30–59 (STGDMFRAAMANQTEMGRLAKSFIDKGELV). Residues T31, R36, 57-59 (ELV), 86-89 (GYPR), and Q93 contribute to the AMP site. Residues 127–165 (GRFICRSCGSTYHKVFNPTKVEGTCDVCGGHEFFQREDD) form an LID region. R128 serves as a coordination point for ATP. Zn(2+) is bound by residues C131 and C134. 137–138 (TY) is an ATP binding site. Positions 151 and 154 each coordinate Zn(2+). Residues R162 and R173 each coordinate AMP. An ATP-binding site is contributed by Q201.

It belongs to the adenylate kinase family. In terms of assembly, monomer.

It localises to the cytoplasm. The enzyme catalyses AMP + ATP = 2 ADP. Its pathway is purine metabolism; AMP biosynthesis via salvage pathway; AMP from ADP: step 1/1. Its function is as follows. Catalyzes the reversible transfer of the terminal phosphate group between ATP and AMP. Plays an important role in cellular energy homeostasis and in adenine nucleotide metabolism. The polypeptide is Adenylate kinase (Streptococcus thermophilus (strain CNRZ 1066)).